The sequence spans 367 residues: Phospho-N-acetylmuramoyl-pentapeptide-transferase (367 aa).

10 helical membrane-spanning segments follow: residues Ile-13–Leu-33, Leu-49–Leu-69, Met-95–Ala-115, Leu-119–Ile-139, Leu-154–Ala-174, Trp-183–Val-203, Ile-215–Ala-235, Thr-237–Ala-257, Ala-281–Val-301, and Val-347–Phe-367.

Belongs to the glycosyltransferase 4 family. MraY subfamily. Mg(2+) serves as cofactor.

The protein resides in the cell inner membrane. The catalysed reaction is UDP-N-acetyl-alpha-D-muramoyl-L-alanyl-gamma-D-glutamyl-meso-2,6-diaminopimeloyl-D-alanyl-D-alanine + di-trans,octa-cis-undecaprenyl phosphate = di-trans,octa-cis-undecaprenyl diphospho-N-acetyl-alpha-D-muramoyl-L-alanyl-D-glutamyl-meso-2,6-diaminopimeloyl-D-alanyl-D-alanine + UMP. Its pathway is cell wall biogenesis; peptidoglycan biosynthesis. Catalyzes the initial step of the lipid cycle reactions in the biosynthesis of the cell wall peptidoglycan: transfers peptidoglycan precursor phospho-MurNAc-pentapeptide from UDP-MurNAc-pentapeptide onto the lipid carrier undecaprenyl phosphate, yielding undecaprenyl-pyrophosphoryl-MurNAc-pentapeptide, known as lipid I. This is Phospho-N-acetylmuramoyl-pentapeptide-transferase from Trichormus variabilis (strain ATCC 29413 / PCC 7937) (Anabaena variabilis).